A 364-amino-acid chain; its full sequence is Probable zinc transporter 10 (364 aa).

Residues 1–28 (MTKSHVIFSASIALFLLLSISHFPGALS) form the signal peptide. At 29–52 (QSNKDCQSKSNYSCIDKNKALDLK) the chain is on the extracellular side. Residues 53-73 (LLSIFSILITSLIGVCLPFFA) traverse the membrane as a helical segment. Topologically, residues 74–85 (RSIPAFQPEKSH) are cytoplasmic. A helical transmembrane segment spans residues 86 to 106 (FLIVKSFASGIILSTGFMHVL). Over 107–125 (PDSFEMLSSPCLNDNPWHK) the chain is Extracellular. The helical transmembrane segment at 126-146 (FPFAGFVAMMSAVFTLMVDSI) threads the bilayer. The Cytoplasmic segment spans residues 147 to 209 (TTSVFTKSGR…GSYLQLLRYR (63 aa)). Residues 210-230 (ILAIVLELGIVVQSIVIGLSV) form a helical membrane-spanning segment. Residues 231–241 (GDTNNTCTIKG) lie on the Extracellular side of the membrane. The helical transmembrane segment at 242-262 (LVAALCFHQMFEGMGLGGCIL) threads the bilayer. Topologically, residues 263–271 (QAEYGWVKK) are cytoplasmic. The helical transmembrane segment at 272–292 (AVMAFFFAVTTPFGVVLGMAL) threads the bilayer. Residues 293-303 (SKTYKENSPES) lie on the Extracellular side of the membrane. Residues 304–324 (LITVGLLNASSAGLLIYMALV) traverse the membrane as a helical segment. At 325–343 (DLLAADFMGQKMQRSIKLQ) the chain is on the cytoplasmic side. A helical transmembrane segment spans residues 344–364 (LKSYAAVLLGAGGMSVMAKWA).

The protein belongs to the ZIP transporter (TC 2.A.5) family.

It is found in the cell membrane. In terms of biological role, probably mediates zinc uptake from the rhizosphere. This chain is Probable zinc transporter 10 (ZIP10), found in Arabidopsis thaliana (Mouse-ear cress).